Consider the following 413-residue polypeptide: Serine hydroxymethyltransferase (413 aa).

Residues leucine 117 and 121–123 (GHL) each bind (6S)-5,6,7,8-tetrahydrofolate. Lysine 226 bears the N6-(pyridoxal phosphate)lysine mark. Residues glutamate 239 and 349-351 (SPF) each bind (6S)-5,6,7,8-tetrahydrofolate.

It belongs to the SHMT family. In terms of assembly, homodimer. Requires pyridoxal 5'-phosphate as cofactor.

It localises to the cytoplasm. The enzyme catalyses (6R)-5,10-methylene-5,6,7,8-tetrahydrofolate + glycine + H2O = (6S)-5,6,7,8-tetrahydrofolate + L-serine. It participates in one-carbon metabolism; tetrahydrofolate interconversion. The protein operates within amino-acid biosynthesis; glycine biosynthesis; glycine from L-serine: step 1/1. In terms of biological role, catalyzes the reversible interconversion of serine and glycine with tetrahydrofolate (THF) serving as the one-carbon carrier. This reaction serves as the major source of one-carbon groups required for the biosynthesis of purines, thymidylate, methionine, and other important biomolecules. Also exhibits THF-independent aldolase activity toward beta-hydroxyamino acids, producing glycine and aldehydes, via a retro-aldol mechanism. This chain is Serine hydroxymethyltransferase, found in Bacillus cereus (strain AH820).